A 501-amino-acid polypeptide reads, in one-letter code: 2-isopropylmalate synthase (501 aa).

One can recognise a Pyruvate carboxyltransferase domain in the interval 7 to 269 (VRIFDTTLRD…QTQIKTEEIA (263 aa)). Residues D16, H204, H206, and N240 each coordinate Mn(2+). The segment at 394–501 (QLEGFTVSTG…RAYISALNRL (108 aa)) is regulatory domain.

Belongs to the alpha-IPM synthase/homocitrate synthase family. LeuA type 1 subfamily. As to quaternary structure, homodimer. It depends on Mn(2+) as a cofactor.

It localises to the cytoplasm. The catalysed reaction is 3-methyl-2-oxobutanoate + acetyl-CoA + H2O = (2S)-2-isopropylmalate + CoA + H(+). It participates in amino-acid biosynthesis; L-leucine biosynthesis; L-leucine from 3-methyl-2-oxobutanoate: step 1/4. Catalyzes the condensation of the acetyl group of acetyl-CoA with 3-methyl-2-oxobutanoate (2-ketoisovalerate) to form 3-carboxy-3-hydroxy-4-methylpentanoate (2-isopropylmalate). This chain is 2-isopropylmalate synthase, found in Leptospira interrogans serogroup Icterohaemorrhagiae serovar copenhageni (strain Fiocruz L1-130).